The primary structure comprises 282 residues: Flagellin (282 aa).

This sequence belongs to the bacterial flagellin family.

The protein resides in the secreted. Its subcellular location is the bacterial flagellum. Flagellin is the subunit protein which polymerizes to form the filaments of bacterial flagella. The flagellum is required to cause a persistent disease in a murine model of infection. The sequence is that of Flagellin (fliC) from Brucella melitensis biotype 1 (strain ATCC 23456 / CCUG 17765 / NCTC 10094 / 16M).